The chain runs to 138 residues: Drosulfakinins (138 aa).

An N-terminal signal peptide occupies residues 1-33 (MGLRSCTHFATLVMPLWALAFCFLVLVPVPAQT). Positions 34–73 (TSLQISKGDRRLQDLESNMGAESDQPNANLVGTSLSRFGD) are excised as a propeptide. Phe82 carries the phenylalanine amide modification. The propeptide occupies 86 to 108 (VPRPIIPIELDLLMDNDDENTKA). Tyr114 bears the Sulfotyrosine mark. Position 119 is a phenylalanine amide (Phe119). Tyr131 bears the Sulfotyrosine mark. At Phe136 the chain carries Phenylalanine amide.

This sequence belongs to the gastrin/cholecystokinin family.

It is found in the secreted. Its function is as follows. Drosulfakinin-0 (DSK 0) plays diverse biological roles including regulating gut muscle contraction in adults but not in larvae. This Drosophila teissieri (Fruit fly) protein is Drosulfakinins.